The following is a 161-amino-acid chain: Large ribosomal subunit protein uL10 (161 aa).

It belongs to the universal ribosomal protein uL10 family. Part of the ribosomal stalk of the 50S ribosomal subunit. The N-terminus interacts with L11 and the large rRNA to form the base of the stalk. The C-terminus forms an elongated spine to which L12 dimers bind in a sequential fashion forming a multimeric L10(L12)X complex.

Its function is as follows. Forms part of the ribosomal stalk, playing a central role in the interaction of the ribosome with GTP-bound translation factors. In Wigglesworthia glossinidia brevipalpis, this protein is Large ribosomal subunit protein uL10 (rplJ).